The chain runs to 413 residues: NADPH dehydrogenase afvA (413 aa).

Residue 53 to 56 participates in FMN binding; it reads APLC. Position 58 (tyrosine 58) interacts with substrate. 2 residues coordinate FMN: alanine 88 and glutamine 130. 211–214 lines the substrate pocket; sequence HAAH. FMN-binding positions include arginine 264 and 370–371; that span reads GR.

Belongs to the NADH:flavin oxidoreductase/NADH oxidase family. NamA subfamily. It depends on FMN as a cofactor.

It catalyses the reaction A + NADPH + H(+) = AH2 + NADP(+). The protein operates within secondary metabolite biosynthesis. Functionally, NADPH dehydrogenase; part of the gene cluster that mediates the biosynthesis of aflavarin, a bicoumarin that exhibits anti-insectan activity against the fungivorous beetle C.hemipterus. The chain is NADPH dehydrogenase afvA from Aspergillus flavus (strain ATCC 200026 / FGSC A1120 / IAM 13836 / NRRL 3357 / JCM 12722 / SRRC 167).